Here is a 28-residue protein sequence, read N- to C-terminus: Conotoxin de7b (28 aa).

Disulfide bonds link cysteine 2-cysteine 18, cysteine 9-cysteine 22, and cysteine 17-cysteine 27. Proline 4 carries the post-translational modification 4-hydroxyproline; partial. A 4-carboxyglutamate; partial modification is found at glutamate 7. Position 14 is a 4-hydroxyproline; partial (proline 14).

In terms of tissue distribution, expressed by the venom duct.

It localises to the secreted. Its function is as follows. May inhibit sodium (Nav) or calcium channels (Cav). This is Conotoxin de7b from Conasprella delessertii (Sozon's cone).